Here is a 495-residue protein sequence, read N- to C-terminus: Trimethylamine methyltransferase MttB1 (495 aa).

Residue Pyl334 is a non-standard amino acid, pyrrolysine.

Belongs to the trimethylamine methyltransferase family. Can form a complex with MttC.

It catalyses the reaction Co(I)-[trimethylamine-specific corrinoid protein] + trimethylamine + H(+) = methyl-Co(III)-[trimethylamine-specific corrinoid protein] + dimethylamine. It participates in one-carbon metabolism; methanogenesis from trimethylamine. Catalyzes the transfer of a methyl group from trimethylamine to the corrinoid cofactor of MttC. The chain is Trimethylamine methyltransferase MttB1 (mttB1) from Methanosarcina mazei (strain ATCC BAA-159 / DSM 3647 / Goe1 / Go1 / JCM 11833 / OCM 88) (Methanosarcina frisia).